The chain runs to 144 residues: Snaclec 6 (144 aa).

The first 23 residues, 1-23 (MGRFISVSFGLLVVFLSLSGTGA), serve as a signal peptide directing secretion. Disulfide bonds link cysteine 25–cysteine 36, cysteine 53–cysteine 142, and cysteine 119–cysteine 134. The C-type lectin domain occupies 32 to 143 (HEGHCYKVFK…CNFIAPVVCK (112 aa)).

Belongs to the snaclec family. As to quaternary structure, heterodimer; disulfide-linked.

Its subcellular location is the secreted. Functionally, interferes with one step of hemostasis (modulation of platelet aggregation, or coagulation cascade, for example). The chain is Snaclec 6 from Daboia siamensis (Eastern Russel's viper).